A 190-amino-acid chain; its full sequence is Holliday junction branch migration complex subunit RuvA (190 aa).

The interval 1-64 (MIGKLTGTLL…EDAQLLYGFG (64 aa)) is domain I. Residues 65–137 (TAQERQAFRE…LKGKLGADVG (73 aa)) are domain II. The segment at 137 to 141 (GVRAH) is flexible linker. The domain III stretch occupies residues 142 to 190 (AANDNQADILQALLALGYNDKEAAAALKALPADVGVSEGIKLALKSLSK).

It belongs to the RuvA family. Homotetramer. Forms an RuvA(8)-RuvB(12)-Holliday junction (HJ) complex. HJ DNA is sandwiched between 2 RuvA tetramers; dsDNA enters through RuvA and exits via RuvB. An RuvB hexamer assembles on each DNA strand where it exits the tetramer. Each RuvB hexamer is contacted by two RuvA subunits (via domain III) on 2 adjacent RuvB subunits; this complex drives branch migration. In the full resolvosome a probable DNA-RuvA(4)-RuvB(12)-RuvC(2) complex forms which resolves the HJ.

The protein resides in the cytoplasm. Its function is as follows. The RuvA-RuvB-RuvC complex processes Holliday junction (HJ) DNA during genetic recombination and DNA repair, while the RuvA-RuvB complex plays an important role in the rescue of blocked DNA replication forks via replication fork reversal (RFR). RuvA specifically binds to HJ cruciform DNA, conferring on it an open structure. The RuvB hexamer acts as an ATP-dependent pump, pulling dsDNA into and through the RuvAB complex. HJ branch migration allows RuvC to scan DNA until it finds its consensus sequence, where it cleaves and resolves the cruciform DNA. The chain is Holliday junction branch migration complex subunit RuvA from Acidovorax sp. (strain JS42).